The following is a 65-amino-acid chain: Beta-defensin 106A (65 aa).

The signal sequence occupies residues 1–20 (MRTFLFLFAVLFFLTPAKNA). Intrachain disulfides connect C26–C53, C33–C47, and C37–C54.

This sequence belongs to the beta-defensin family. As to quaternary structure, monomer. Interacts with CCR2 (via extracellular N-terminal region); this interaction may preferentially require specific tyrosine sulfation on CCR2.

The protein localises to the secreted. Its subcellular location is the membrane. Has antibacterial activity. Acts as a ligand for C-C chemokine receptor CCR2. This Gorilla gorilla gorilla (Western lowland gorilla) protein is Beta-defensin 106A (DEFB106A).